A 317-amino-acid chain; its full sequence is Transaldolase (317 aa).

Residue Lys132 is the Schiff-base intermediate with substrate of the active site.

The protein belongs to the transaldolase family. Type 1 subfamily. In terms of assembly, homodimer.

It localises to the cytoplasm. The enzyme catalyses D-sedoheptulose 7-phosphate + D-glyceraldehyde 3-phosphate = D-erythrose 4-phosphate + beta-D-fructose 6-phosphate. The protein operates within carbohydrate degradation; pentose phosphate pathway; D-glyceraldehyde 3-phosphate and beta-D-fructose 6-phosphate from D-ribose 5-phosphate and D-xylulose 5-phosphate (non-oxidative stage): step 2/3. Its function is as follows. Transaldolase is important for the balance of metabolites in the pentose-phosphate pathway. The chain is Transaldolase from Yersinia pseudotuberculosis serotype O:1b (strain IP 31758).